Reading from the N-terminus, the 247-residue chain is MEGVEEKKKVPAVPETLKKKRRNFAELKIKRLRKKFAQKMLRKARRKLIYEKAKHYHKEYRQMYRTEIRMARMARKAGNFYVPAEPKLAFVIRIRGINGVSPKVRKVLQLLRLRQIFNGTFVKLNKASINMLRIVEPYIAWGYPNLKSVNELIYKRGYGKINKKRIALTDNALIARSLGKYGIICMEDLIHEIYTVGKRFKEANNFLWPFKLSSPRGGMKKKTTHFVEGGDAGNREDQINRLIRRMN.

The residue at position 1 (methionine 1) is an N-acetylmethionine. 4 consecutive repeat copies span residues 7–17 (KKKVPAVPETL), 18–29 (KKKRRNFAELKI), 30–41 (KRLRKKFAQKML), and 42–53 (RKARRKLIYEKA). The interval 7 to 53 (KKKVPAVPETLKKKRRNFAELKIKRLRKKFAQKMLRKARRKLIYEKA) is 4 X 12 AA tandem repeats. Threonine 16 is subject to Phosphothreonine. Lysine 123 is subject to N6-acetyllysine. Lysine 126 carries the post-translational modification N6-succinyllysine. At tyrosine 138 the chain carries Phosphotyrosine.

Belongs to the universal ribosomal protein uL30 family. As to quaternary structure, component of the large ribosomal subunit. Homodimer. Interacts with DHX33.

It localises to the cytoplasm. Its function is as follows. Component of the large ribosomal subunit. The ribosome is a large ribonucleoprotein complex responsible for the synthesis of proteins in the cell. Binds to G-rich structures in 28S rRNA and in mRNAs. Plays a regulatory role in the translation apparatus; inhibits cell-free translation of mRNAs. This is Large ribosomal subunit protein uL30 (RPL7) from Pongo abelii (Sumatran orangutan).